Consider the following 517-residue polypeptide: Alpha-amylase (517 aa).

Positions 1–21 (MAHLLLAVVAITLALSQSVFG) are cleaved as a signal peptide. Residues Cys52 and Cys108 are joined by a disulfide bond. Ca(2+)-binding residues include Asn122, Arg178, and Asp187. A chloride-binding site is contributed by Arg215. Catalysis depends on Asp217, which acts as the Nucleophile. His221 contacts Ca(2+). Glu253 acts as the Proton donor in catalysis. Arg355 serves as a coordination point for chloride. Intrachain disulfides connect Cys397–Cys403 and Cys470–Cys482.

The protein belongs to the glycosyl hydrolase 13 family. Monomer. It depends on Ca(2+) as a cofactor. Chloride is required as a cofactor.

The protein localises to the secreted. It catalyses the reaction Endohydrolysis of (1-&gt;4)-alpha-D-glucosidic linkages in polysaccharides containing three or more (1-&gt;4)-alpha-linked D-glucose units.. With respect to regulation, activated by chloride ions. Inhibited by acarbose. Not inhibited by wheat alpha-amylase inhibitors 1 (WI-1, the tetrameric form) or 3 (WI-3, the monomeric form) and bean alpha-amylase inhibitor 1 (alphaAI-1). This chain is Alpha-amylase, found in Acarus siro (Flour mite).